Consider the following 362-residue polypeptide: Methylthioribose-1-phosphate isomerase (362 aa).

Residues 53-55 (RGA), Arg-90, and Gln-201 each bind substrate. Catalysis depends on Asp-242, which acts as the Proton donor. Substrate is bound at residue 252 to 253 (NK).

Belongs to the eIF-2B alpha/beta/delta subunits family. MtnA subfamily.

It catalyses the reaction 5-(methylsulfanyl)-alpha-D-ribose 1-phosphate = 5-(methylsulfanyl)-D-ribulose 1-phosphate. It functions in the pathway amino-acid biosynthesis; L-methionine biosynthesis via salvage pathway; L-methionine from S-methyl-5-thio-alpha-D-ribose 1-phosphate: step 1/6. Catalyzes the interconversion of methylthioribose-1-phosphate (MTR-1-P) into methylthioribulose-1-phosphate (MTRu-1-P). This Paramagnetospirillum magneticum (strain ATCC 700264 / AMB-1) (Magnetospirillum magneticum) protein is Methylthioribose-1-phosphate isomerase.